The chain runs to 363 residues: Phosphoserine aminotransferase (363 aa).

L-glutamate is bound at residue arginine 41. Pyridoxal 5'-phosphate-binding positions include 75 to 76, tryptophan 100, threonine 155, aspartate 175, and glutamine 198; that span reads AS. Position 199 is an N6-(pyridoxal phosphate)lysine (lysine 199). 239–240 is a pyridoxal 5'-phosphate binding site; sequence NT.

This sequence belongs to the class-V pyridoxal-phosphate-dependent aminotransferase family. SerC subfamily. Homodimer. It depends on pyridoxal 5'-phosphate as a cofactor.

The protein resides in the cytoplasm. It catalyses the reaction O-phospho-L-serine + 2-oxoglutarate = 3-phosphooxypyruvate + L-glutamate. It carries out the reaction 4-(phosphooxy)-L-threonine + 2-oxoglutarate = (R)-3-hydroxy-2-oxo-4-phosphooxybutanoate + L-glutamate. Its pathway is amino-acid biosynthesis; L-serine biosynthesis; L-serine from 3-phospho-D-glycerate: step 2/3. Functionally, catalyzes the reversible conversion of 3-phosphohydroxypyruvate to phosphoserine and of 3-hydroxy-2-oxo-4-phosphonooxybutanoate to phosphohydroxythreonine. The sequence is that of Phosphoserine aminotransferase from Streptococcus agalactiae serotype III (strain NEM316).